Consider the following 184-residue polypeptide: Probable cobalt-precorrin-6B C(15)-methyltransferase (decarboxylating) (184 aa).

Residues threonine 12, 36-40 (GCGTG), aspartate 59, and alanine 87 each bind S-adenosyl-L-methionine.

This sequence belongs to the methyltransferase superfamily. Archaeal-type CbiT family.

The catalysed reaction is Co-precorrin-6B + S-adenosyl-L-methionine = Co-precorrin-7 + S-adenosyl-L-homocysteine + CO2. It participates in cofactor biosynthesis; adenosylcobalamin biosynthesis; cob(II)yrinate a,c-diamide from sirohydrochlorin (anaerobic route): step 8/10. In terms of biological role, catalyzes the methylation of C-15 in cobalt-precorrin-6B followed by the decarboxylation of C-12 to form cobalt-precorrin-7. This is Probable cobalt-precorrin-6B C(15)-methyltransferase (decarboxylating) from Methanosarcina acetivorans (strain ATCC 35395 / DSM 2834 / JCM 12185 / C2A).